Consider the following 379-residue polypeptide: ATP-sensitive inward rectifier potassium channel 10 (379 aa).

Residues 1–61 are Cytoplasmic-facing; it reads MTSVAKVYYS…LKDLWTTFID (61 aa). R36 contacts 1,2-dioctanoyl-sn-glycero-3-phospho-(1D-myo-inositol-4,5-bisphosphate). Residues 62–88 traverse the membrane as a helical segment; it reads MQWRYKLLLFSATFAGTWFLFGVVWYL. The Extracellular segment spans residues 89-114; that stretch reads VAVAHGDLLELDPPANHTPCVVQVHT. A disulfide bond links C108 and C140. The discontinuously helical; Pore-forming intramembrane region spans 115–131; sequence LTGAFLFSLESQTTIGY. Residues 128–133 carry the Selectivity filter motif; sequence TIGYGF. The Extracellular portion of the chain corresponds to 132–140; it reads GFRYISEEC. Residues 141–166 traverse the membrane as a helical segment; sequence PLAIVLLIAQLVLTTILEIFITGTFL. Residues 167–379 lie on the Cytoplasmic side of the membrane; that stretch reads AKIARPKKRA…SALSVRISNV (213 aa). 3 residues coordinate 1,2-dioctanoyl-sn-glycero-3-phospho-(1D-myo-inositol-4,5-bisphosphate): K168, R171, and K173. 210–217 provides a ligand contact to ATP; that stretch reads GCQVTGKL.

It belongs to the inward rectifier-type potassium channel (TC 1.A.2.1) family. KCNJ10 subfamily. In terms of assembly, homotetramer. In kidney cells, it forms heteromeric channels with Kir5.1/KCNJ16; this interaction is required for KCNJ16 localization to the basolateral membrane. Interacts with MAGI1, alone and possibly as a heteromer with KCNJ16; this interaction may facilitate KCNJ10/KCNJ16 potassium channel expression at the basolateral membrane in kidney cells. Interacts with PATJ. Expressed in kidney (at protein level). In the nephron, expressed in the distal convoluted tubule, the connecting tubule, the collecting duct and cortical thick ascending limbs.

It is found in the membrane. The protein resides in the basolateral cell membrane. It catalyses the reaction K(+)(in) = K(+)(out). With respect to regulation, channel activity is strongly regulated by variations of cytosolic pH; channels are activated by alkaline and inhibited by acidic pH values. Inhibited by Ba(2+) and Cs(+). Activated by phosphatidylinositol 4,5 biphosphate (PtdIns(4,5)P2). In terms of biological role, may be responsible for potassium buffering action of glial cells in the brain. Inward rectifier potassium channels are characterized by a greater tendency to allow potassium to flow into the cell rather than out of it. Their voltage dependence is regulated by the concentration of extracellular potassium; as external potassium is raised, the voltage range of the channel opening shifts to more positive voltages. The inward rectification is mainly due to the blockage of outward current by internal magnesium. Can be blocked by extracellular barium and cesium. In the kidney, together with KCNJ16, mediates basolateral K(+) recycling in distal tubules; this process is critical for Na(+) reabsorption at the tubules. This Homo sapiens (Human) protein is ATP-sensitive inward rectifier potassium channel 10.